We begin with the raw amino-acid sequence, 332 residues long: MQFKHFKLATLAAALAFSANSFADITVYNGQHKEAATAVAKAFEQETGIKVTLNSGKSEQLAGQLKEEGDKTPADVFYTEQTATFADLSEAGLLAPISEQTIQQTAQKGVPLAPKKDWIALSGRSRVVVYDHTKLSEKDMEKSVLDYATPKWKGKIGYVSTSGAFLEQVVALSKMKGDKVALNWLKGLKENGKLYAKNSVALQAVENGEVPAALINNYYWYNLAKEKGVENLKSRLYFVRHQDPGALVSYSGAAVLKASKNQAEAQKFVDFLASKKGQEALVAARAEYPLRADVVSPFNLEPYEKLEAPVVSATTAQDKEHAIKLIEEAGLK.

Residues 1 to 23 (MQFKHFKLATLAAALAFSANSFA) form the signal peptide. Fe cation-binding residues include His-32, Glu-80, Tyr-218, and Tyr-219.

This sequence belongs to the bacterial solute-binding protein 1 family. In terms of assembly, the complex is composed of two ATP-binding proteins (FbpC), two transmembrane proteins (FbpB) and a solute-binding protein (FbpA).

It is found in the periplasm. Part of the ABC transporter complex FbpABC (TC 3.A.1.10.1) involved in Fe(3+) ions import. This protein specifically binds Fe(3+) and is involved in its transmembrane transport. This chain is Iron-utilization periplasmic protein (fbpA), found in Haemophilus influenzae (strain ATCC 51907 / DSM 11121 / KW20 / Rd).